The chain runs to 416 residues: Serine hydroxymethyltransferase (416 aa).

Residues Leu121 and 125–127 (GHL) each bind (6S)-5,6,7,8-tetrahydrofolate. The residue at position 229 (Lys229) is an N6-(pyridoxal phosphate)lysine.

The protein belongs to the SHMT family. In terms of assembly, homodimer. Requires pyridoxal 5'-phosphate as cofactor.

Its subcellular location is the cytoplasm. It catalyses the reaction (6R)-5,10-methylene-5,6,7,8-tetrahydrofolate + glycine + H2O = (6S)-5,6,7,8-tetrahydrofolate + L-serine. It participates in one-carbon metabolism; tetrahydrofolate interconversion. It functions in the pathway amino-acid biosynthesis; glycine biosynthesis; glycine from L-serine: step 1/1. Its function is as follows. Catalyzes the reversible interconversion of serine and glycine with tetrahydrofolate (THF) serving as the one-carbon carrier. This reaction serves as the major source of one-carbon groups required for the biosynthesis of purines, thymidylate, methionine, and other important biomolecules. Also exhibits THF-independent aldolase activity toward beta-hydroxyamino acids, producing glycine and aldehydes, via a retro-aldol mechanism. The chain is Serine hydroxymethyltransferase from Aromatoleum aromaticum (strain DSM 19018 / LMG 30748 / EbN1) (Azoarcus sp. (strain EbN1)).